Reading from the N-terminus, the 126-residue chain is Glycine cleavage system H protein (126 aa).

The region spanning 21–103 is the Lipoyl-binding domain; the sequence is TVTVGISNHA…YEGGWIARIK (83 aa). Lys62 bears the N6-lipoyllysine mark.

The protein belongs to the GcvH family. In terms of assembly, the glycine cleavage system is composed of four proteins: P, T, L and H. Requires (R)-lipoate as cofactor.

In terms of biological role, the glycine cleavage system catalyzes the degradation of glycine. The H protein shuttles the methylamine group of glycine from the P protein to the T protein. This is Glycine cleavage system H protein from Aliivibrio salmonicida (strain LFI1238) (Vibrio salmonicida (strain LFI1238)).